The sequence spans 370 residues: Erythronate-4-phosphate dehydrogenase (370 aa).

Substrate is bound by residues Ser-45 and Thr-66. NAD(+) contacts are provided by Asp-142 and Thr-169. Arg-202 is an active-site residue. Asp-228 contributes to the NAD(+) binding site. Residue Glu-233 is part of the active site. Catalysis depends on His-250, which acts as the Proton donor. Residue Gly-253 participates in NAD(+) binding. Tyr-254 lines the substrate pocket.

It belongs to the D-isomer specific 2-hydroxyacid dehydrogenase family. PdxB subfamily. In terms of assembly, homodimer.

The protein resides in the cytoplasm. The enzyme catalyses 4-phospho-D-erythronate + NAD(+) = (R)-3-hydroxy-2-oxo-4-phosphooxybutanoate + NADH + H(+). It participates in cofactor biosynthesis; pyridoxine 5'-phosphate biosynthesis; pyridoxine 5'-phosphate from D-erythrose 4-phosphate: step 2/5. In terms of biological role, catalyzes the oxidation of erythronate-4-phosphate to 3-hydroxy-2-oxo-4-phosphonooxybutanoate. This Teredinibacter turnerae (strain ATCC 39867 / T7901) protein is Erythronate-4-phosphate dehydrogenase.